A 144-amino-acid chain; its full sequence is Protein cornichon (144 aa).

Over 1-10 the chain is Lumenal; sequence MAFNFTAFTY. The tract at residues 1–57 is interaction with grk; the sequence is MAFNFTAFTYIVALIGDAFLIFFAIFHVIAFDELKTDYKNPIDQCNSLNPLVLPEYL. A helical membrane pass occupies residues 11–31; that stretch reads IVALIGDAFLIFFAIFHVIAF. The Cytoplasmic portion of the chain corresponds to 32–56; that stretch reads DELKTDYKNPIDQCNSLNPLVLPEY. Residues 57–77 traverse the membrane as a helical segment; that stretch reads LLHIFLNLLFLFCGEWFSLCI. Residues 78–122 lie on the Lumenal side of the membrane; that stretch reads NIPLIAYHIWRYKNRPVMSGPGLYDPTTVLKTDTLYRNMREGWIK. Residues 123 to 143 form a helical membrane-spanning segment; it reads LAVYLISFFYYIYGMVYSLIS. Residue Thr144 is a topological domain, cytoplasmic.

Belongs to the cornichon family. Interacts with grk. In terms of tissue distribution, expressed in male and female somatic tissues.

The protein localises to the endoplasmic reticulum membrane. Acts as a cargo receptor necessary for the transportation of gurken (grk) to a transitional endoplasmic reticulum (tER) site and promotes its incorporation into coat protein complex II (COPII) vesicles. Associated with gurken, produces a signal received by torpedo resulting in a signaling pathway that first establishes posterior follicle cell fates and normal localization of the anterior and posterior determinants, later they act in a signaling event inducing dorsal follicle cell fates and regulating the dorsal-ventral pattern of egg and embryo. The polypeptide is Protein cornichon (cni) (Drosophila melanogaster (Fruit fly)).